A 459-amino-acid polypeptide reads, in one-letter code: Cysteine desulfurase (459 aa).

The transit peptide at 1–17 (MVGSVAGNMLLRAAWRR) directs the protein to the mitochondrion. Alanine 129, threonine 130, glutamine 237, serine 257, and histidine 259 together coordinate pyridoxal 5'-phosphate. Lysine 260 carries the post-translational modification N6-(pyridoxal phosphate)lysine. Threonine 297 provides a ligand contact to pyridoxal 5'-phosphate. Cysteine 383 (cysteine persulfide intermediate) is an active-site residue. Position 383 (cysteine 383) interacts with [2Fe-2S] cluster. Cysteine 383 contacts Zn(2+). Position 383 is a cysteine persulfide (cysteine 383).

The protein belongs to the class-V pyridoxal-phosphate-dependent aminotransferase family. NifS/IscS subfamily. As to quaternary structure, homodimer. Component of the mitochondrial core iron-sulfur cluster (ISC) complex composed of NFS1, LYRM4, NDUFAB1, ISCU, FXN, and FDX2; this complex is a heterohexamer containing two copies of each monomer. Component of cyteine desulfurase complex composed of NFS1, LYRM4 and NDUFAB1; this complex contributes to the activation of cysteine desulfurase activity and NFS1 stabilization. Interacts (homodimer form) with ISCU (D-state); each monomer interacts with the C-terminal regions of each NFS1 monomer. Interacts with HSPA9. Interacts (via homodimer form) with FDX2. Interacts (via homodimer form) with FXN. Interacts with LYRM4. Component of a complex composed of FXN, NFS1, LYRM4 and ISCU. Pyridoxal 5'-phosphate serves as cofactor. In terms of processing, N-gluconoylated. Post-translationally, cysteine persulfide intermediate is reduced by thiol-containing molecules like glutathione and L-cysteine. Persulfide reduction is a rate-limiting step of cysteine desulfurase catalytic cycle. As to expression, ubiquitous.

It localises to the mitochondrion. The enzyme catalyses (sulfur carrier)-H + L-cysteine = (sulfur carrier)-SH + L-alanine. It catalyses the reaction L-cysteinyl-[cysteine desulfurase] + L-cysteine = S-sulfanyl-L-cysteinyl-[cysteine desulfurase] + L-alanine. Active only in complex with LYRM4. Its function is as follows. Mitochondrial cysteine desulfurase, of the core iron-sulfur cluster (ISC) assembly complex, that catalyzes the desulfuration of L-cysteine to L-alanine, as component of the cysteine desulfurase complex, leading to the formation of a cysteine persulfide intermediate at the active site cysteine residue and participates in the [2Fe-2S] clusters assembly on the scaffolding protein ISCU. The persulfide is then transferred on the flexible Cys loop from the catalytic site of NFS1 to the surface of NFS1. After the NFS1-linked persulfide sulfur is transferred to one of the conserved Cys residues of the scaffold, a reaction assisted by FXN. The core iron-sulfur cluster (ISC) assembly complex is involved in the de novo synthesis of a [2Fe-2S] cluster, the first step of the mitochondrial iron-sulfur protein biogenesis. This process is initiated by the cysteine desulfurase complex (NFS1:LYRM4:NDUFAB1) that produces persulfide which is delivered on the scaffold protein ISCU in a FXN-dependent manner. Then this complex is stabilized by FDX2 which provides reducing equivalents to accomplish the [2Fe-2S] cluster assembly. Finally, the [2Fe-2S] cluster is transferred from ISCU to chaperone proteins, including HSCB, HSPA9 and GLRX5. This Mus musculus (Mouse) protein is Cysteine desulfurase.